The primary structure comprises 159 residues: Ribosomal RNA large subunit methyltransferase H (159 aa).

S-adenosyl-L-methionine contacts are provided by residues Leu-76, Gly-108, and 127–132; that span reads FSKMTL.

This sequence belongs to the RNA methyltransferase RlmH family. Homodimer.

The protein localises to the cytoplasm. The catalysed reaction is pseudouridine(1915) in 23S rRNA + S-adenosyl-L-methionine = N(3)-methylpseudouridine(1915) in 23S rRNA + S-adenosyl-L-homocysteine + H(+). Its function is as follows. Specifically methylates the pseudouridine at position 1915 (m3Psi1915) in 23S rRNA. This chain is Ribosomal RNA large subunit methyltransferase H, found in Bacillus anthracis (strain CDC 684 / NRRL 3495).